Consider the following 431-residue polypeptide: Glucose-1-phosphate adenylyltransferase (431 aa).

Residues Gly163, 178 to 179, and Ser210 each bind alpha-D-glucose 1-phosphate; that span reads EK.

Belongs to the bacterial/plant glucose-1-phosphate adenylyltransferase family. In terms of assembly, homotetramer.

The enzyme catalyses alpha-D-glucose 1-phosphate + ATP + H(+) = ADP-alpha-D-glucose + diphosphate. It functions in the pathway glycan biosynthesis; glycogen biosynthesis. In terms of biological role, involved in the biosynthesis of ADP-glucose, a building block required for the elongation reactions to produce glycogen. Catalyzes the reaction between ATP and alpha-D-glucose 1-phosphate (G1P) to produce pyrophosphate and ADP-Glc. The polypeptide is Glucose-1-phosphate adenylyltransferase (Synechococcus sp. (strain WH7803)).